Consider the following 252-residue polypeptide: uncharacterized protein (252 aa).

An N-terminal signal peptide occupies residues 1–23 (MKLLKTVPAIVMLAGGMFASLNA). Residues 231-252 (EPPESAPEHTDRRTTLSLGYSM) are disordered.

This is an uncharacterized protein from Escherichia coli (strain K12).